Reading from the N-terminus, the 408-residue chain is Bone morphogenetic protein 4 (408 aa).

Positions 1-19 are cleaved as a signal peptide; sequence MIPGNRMLMVVLLCQVLLG. Residues 20–292 constitute a propeptide that is removed on maturation; it reads GASHASLIPE…HTLTRRRAKR (273 aa). Ser-91 carries the post-translational modification Phosphoserine. The disordered stretch occupies residues 91–111; it reads SGEEEEEEQSQGTGLEYPERP. 2 N-linked (GlcNAc...) asparagine glycosylation sites follow: Asn-144 and Asn-209. The segment at 281-307 is disordered; it reads RGHTLTRRRAKRSPKHHPQRSRKKNKN. Residues 284–307 show a composition bias toward basic residues; the sequence is TLTRRRAKRSPKHHPQRSRKKNKN. 3 disulfides stabilise this stretch: Cys-308–Cys-373, Cys-337–Cys-405, and Cys-341–Cys-407. N-linked (GlcNAc...) asparagine glycans are attached at residues Asn-350 and Asn-365.

It belongs to the TGF-beta family. In terms of assembly, homodimer; disulfide-linked. Interacts with SOSTDC1, GREM2, RGMA, RGMB and RGMC. Part of a complex consisting of TWSG1 and CHRD. Interacts with the serine proteases, HTRA1 and HTRA3; the interaction with either inhibits BMP4-mediated signaling. The HTRA protease activity is required for this inhibition. Interacts with FBN1 (via N-terminal domain) and FBN2. Interacts with type I receptor BMPR1A. Interacts with type II receptor BMPR2. Interacts with FSTL1; this interaction inhibits the activation of the BMP4/Smad1/5/8 signaling pathway. Interacts with SCUBE3. Interacts with TGFBR3. In the cochlea, detected in nonprosensory regions and outer sulcus (at protein level). Prior to gastrulation, expressed in the extraembryonic ectoderm. Later, expressed in the extraembryonic mesoderm.

The protein resides in the secreted. It localises to the extracellular space. The protein localises to the extracellular matrix. Its function is as follows. Growth factor of the TGF-beta superfamily that plays essential roles in many developmental processes, including neurogenesis, vascular development, angiogenesis and osteogenesis. Acts in concert with PTHLH/PTHRP to stimulate ductal outgrowth during embryonic mammary development and to inhibit hair follicle induction. Initiates the canonical BMP signaling cascade by associating with type I receptor BMPR1A and type II receptor BMPR2. Once all three components are bound together in a complex at the cell surface, BMPR2 phosphorylates and activates BMPR1A. In turn, BMPR1A propagates signal by phosphorylating SMAD1/5/8 that travel to the nucleus and act as activators and repressors of transcription of target genes. Positively regulates the expression of odontogenic development regulator MSX1 via inducing the IPO7-mediated import of SMAD1 to the nucleus. Required for MSX1-mediated mesenchymal molar tooth bud development beyond the bud stage, via promoting Wnt signaling. Acts as a positive regulator of odontoblast differentiation during mesenchymal tooth germ formation, expression is repressed during the bell stage by MSX1-mediated inhibition of CTNNB1 signaling. Able to induce its own expression in dental mesenchymal cells and also in the neighboring dental epithelial cells via an MSX1-mediated pathway. Can also signal through non-canonical BMP pathways such as ERK/MAP kinase, PI3K/Akt or SRC cascades. For example, induces SRC phosphorylation which, in turn, activates VEGFR2, leading to an angiogenic response. In Mus musculus (Mouse), this protein is Bone morphogenetic protein 4.